The following is a 192-amino-acid chain: MLKKTFAALALGTALLSAGQAMAAEYKIDKEGQHAFVDWKISHLGYSFIHGTFKDFDGNFTWDSAKPEASKISVDLKTASLWSNHAERDKHIASADFLDVKKYPEAKFVSTAVKSTGEKTADVTGDLTMHGVTKPVTFKATFNGEGKDPWGGERAGFNATTTLNLNDFGIKGPGATSQTLDLDISVEGVKQK.

A signal peptide spans 1-23; sequence MLKKTFAALALGTALLSAGQAMA.

The protein belongs to the UPF0312 family. Type 1 subfamily.

The protein localises to the periplasm. The chain is UPF0312 protein PputGB1_5030 from Pseudomonas putida (strain GB-1).